Reading from the N-terminus, the 260-residue chain is MAKEWGYADHNGPDHWHEFYPIAKGDNQSPIELHTKDINHDPSLKAWTASYDPGSAKTILNNGRTCRVVFDDTYDRSMLRGGPLTAPYRLRQFHLHWGSSDDHGSEHTVDGVKYAAELHLVHWNPKYNTYGGALKQPDGIAVVGVFLKIGREKGEFQLFLDALDKIKTKGKEAPFTNFDPSCLFPTCRDYWTYRGSFTTPPCEECIVWLLLKEPITVSSDQVAKLRSLFSSAENEPPVPLVRNWRPPQPLKGRVVRASFK.

At Ala2 the chain carries N-acetylalanine. In terms of domain architecture, Alpha-carbonic anhydrase spans 3–259; it reads KEWGYADHNG…LKGRVVRASF (257 aa). Ser29, Ser43, Ser50, and Ser55 each carry phosphoserine. The interval 64–67 is involved in proton transfer; the sequence is RTCR. Position 73 is a phosphothreonine (Thr73). Zn(2+) is bound by residues His94, His96, and His119. The residue at position 127 (Tyr127) is a Phosphotyrosine. Phosphothreonine occurs at positions 129 and 176. 2 positions are modified to S-glutathionyl cysteine: Cys182 and Cys187. Residue 198–199 participates in substrate binding; it reads TT. At Thr216 the chain carries Phosphothreonine. A Phosphoserine modification is found at Ser219.

Belongs to the alpha-carbonic anhydrase family. Requires Zn(2+) as cofactor. Post-translationally, S-thiolated both by thiol-disulfide exchange with glutathione disulfide and by oxyradical-initiated S-thiolation with reduced glutathione. S-glutathionylated in hepatocytes under oxidative stress.

It is found in the cytoplasm. It catalyses the reaction hydrogencarbonate + H(+) = CO2 + H2O. With respect to regulation, inhibited by acetazolamide. Reversible hydration of carbon dioxide. The chain is Carbonic anhydrase 3 (CA3) from Equus caballus (Horse).